Consider the following 61-residue polypeptide: Small ribosomal subunit protein uS14 (61 aa).

Zn(2+)-binding residues include C24, C27, C40, and C43.

This sequence belongs to the universal ribosomal protein uS14 family. Zinc-binding uS14 subfamily. In terms of assembly, part of the 30S ribosomal subunit. Contacts proteins S3 and S10. Zn(2+) is required as a cofactor.

Binds 16S rRNA, required for the assembly of 30S particles and may also be responsible for determining the conformation of the 16S rRNA at the A site. This is Small ribosomal subunit protein uS14 from Symbiobacterium thermophilum (strain DSM 24528 / JCM 14929 / IAM 14863 / T).